Reading from the N-terminus, the 320-residue chain is Calnexin-independence factor 1 (320 aa).

A disordered region spans residues 16 to 36 (SAETSVGEKQPKRKRSEVRAE).

It is found in the nucleus. It localises to the nucleolus. Its function is as follows. Induces a stably inheritable state of calnexin independence called the Cin state when overexpressed. The polypeptide is Calnexin-independence factor 1 (cif1) (Schizosaccharomyces pombe (strain 972 / ATCC 24843) (Fission yeast)).